Consider the following 231-residue polypeptide: NKG2-C type II integral membrane protein (231 aa).

A compositionally biased stretch (polar residues) spans 1-12 (MNKQRGTFSEVS). The segment at 1–32 (MNKQRGTFSEVSLAQDPKRQQRKPKGNKSSIS) is disordered. Over 1 to 70 (MNKQRGTFSE…CQGLLPPPEK (70 aa)) the chain is Cytoplasmic. A helical; Signal-anchor for type II membrane protein transmembrane segment spans residues 71–93 (LTAEVLGIICIVLMATVLKTIVL). The Extracellular segment spans residues 94–231 (IPFLEQNNFS…SMIYHCKHKL (138 aa)). N100 carries N-linked (GlcNAc...) asparagine glycosylation. The 114-residue stretch at 116–229 (HCPEEWITYS…GSSMIYHCKH (114 aa)) folds into the C-type lectin domain. Intrachain disulfides connect C117–C128, C145–C227, and C206–C219. N149 and N178 each carry an N-linked (GlcNAc...) asparagine glycan.

As to quaternary structure, heterodimer with KLRD1; disulfide-linked. KLRD1-KLRC2 receptor complex interacts with TYROBP homodimer; this interaction is necessary for the expression on the cell surface. KLRD1-KLRC2 receptor complex can bind with low affinity to HLA-E loaded with self-peptides derived from the signal sequence of classical MHC class Ia. In terms of tissue distribution, expressed in NK cell subsets, in particular in adaptive CD57-positive NK cells (at protein level). Expressed in terminally differentiated cytotoxic gamma-delta T cells (at protein level). Expressed in alpha-beta T cells subsets (at protein level). KLRD1-KLRC1 and KLRD1-KLRC2 are differentially expressed within NK and T cell populations, with only minor subsets expressing both receptor complexes (at protein level).

The protein resides in the cell membrane. Its function is as follows. Immune activating receptor involved in self-nonself discrimination. In complex with KLRD1 on cytotoxic lymphocyte subsets, recognizes non-classical major histocompatibility (MHC) class Ib HLA-E loaded with signal sequence-derived peptides from non-classical MHC class Ib HLA-G molecules, likely playing a role in the generation and effector functions of adaptive natural killer (NK) cells and in maternal-fetal tolerance during pregnancy. Regulates the effector functions of terminally differentiated cytotoxic lymphocyte subsets, and in particular may play a role in adaptive NK cell response to viral infection. Upon HLA-E-peptide binding, transmits intracellular signals via the adapter protein TYROBP/DAP12, triggering the phosphorylation of proximal signaling molecules and cell activation. This is NKG2-C type II integral membrane protein (KLRC2) from Homo sapiens (Human).